The chain runs to 285 residues: Bifunctional protein FolD (285 aa).

Residues 164–166 (GAS), Ile-189, and Ile-230 contribute to the NADP(+) site.

The protein belongs to the tetrahydrofolate dehydrogenase/cyclohydrolase family. In terms of assembly, homodimer.

It catalyses the reaction (6R)-5,10-methylene-5,6,7,8-tetrahydrofolate + NADP(+) = (6R)-5,10-methenyltetrahydrofolate + NADPH. It carries out the reaction (6R)-5,10-methenyltetrahydrofolate + H2O = (6R)-10-formyltetrahydrofolate + H(+). Its pathway is one-carbon metabolism; tetrahydrofolate interconversion. In terms of biological role, catalyzes the oxidation of 5,10-methylenetetrahydrofolate to 5,10-methenyltetrahydrofolate and then the hydrolysis of 5,10-methenyltetrahydrofolate to 10-formyltetrahydrofolate. This chain is Bifunctional protein FolD, found in Sulfurimonas denitrificans (strain ATCC 33889 / DSM 1251) (Thiomicrospira denitrificans (strain ATCC 33889 / DSM 1251)).